An 84-amino-acid chain; its full sequence is Small ribosomal subunit protein bS16 (84 aa).

Belongs to the bacterial ribosomal protein bS16 family.

This is Small ribosomal subunit protein bS16 from Methylococcus capsulatus (strain ATCC 33009 / NCIMB 11132 / Bath).